A 180-amino-acid chain; its full sequence is Hypoxanthine-guanine phosphoribosyltransferase (180 aa).

Lys-43 and Gly-44 together coordinate diphosphate. 2 residues coordinate Mg(2+): Glu-99 and Asp-100. The active-site Proton acceptor is Asp-103. Residues Lys-131, 152-153 (FV), and Asp-159 each bind GMP. Arg-165 is a binding site for diphosphate.

It belongs to the purine/pyrimidine phosphoribosyltransferase family. The cofactor is Mg(2+).

Its subcellular location is the cytoplasm. It carries out the reaction IMP + diphosphate = hypoxanthine + 5-phospho-alpha-D-ribose 1-diphosphate. It catalyses the reaction GMP + diphosphate = guanine + 5-phospho-alpha-D-ribose 1-diphosphate. The protein operates within purine metabolism; IMP biosynthesis via salvage pathway; IMP from hypoxanthine: step 1/1. It functions in the pathway purine metabolism; GMP biosynthesis via salvage pathway; GMP from guanine: step 1/1. Its function is as follows. Purine salvage pathway enzyme that catalyzes the transfer of the ribosyl-5-phosphate group from 5-phospho-alpha-D-ribose 1-diphosphate (PRPP) to the N9 position of the 6-oxopurines hypoxanthine and guanine to form the corresponding ribonucleotides IMP (inosine 5'-monophosphate) and GMP (guanosine 5'-monophosphate), with the release of PPi. The polypeptide is Hypoxanthine-guanine phosphoribosyltransferase (hpt) (Streptococcus pneumoniae serotype 4 (strain ATCC BAA-334 / TIGR4)).